A 774-amino-acid chain; its full sequence is MAVNGTGNGTGDGDFSLKETSPNIGNGGVNGGEKLTSSFDLVEAMHFLYARIVRARALPVNDSFVAVKIGSYKGRTKQILNSNPNPEFHETFAFTKTRLQGDILEVVVRNRDNPNEDDIVGKCKFDVAEIPTRVPPDSPLAPQWYRLEDRNGVKIGGEIMVSVWIGTQADEVFSEAWHSDSASVTGENVVNTRSKVYLSPRLWYLRVNVIEAQDLVLLHPNRINPEILIKGFLGNVVVRSRISQTKSVSPVWNEDMMFVAVEPFDDSLILSVEDKVGPREECLGRCEIKLSQVERRVLPGPVPSLWYNVEHIGETGEGRRFAGRIHLRVSLDGGYHVLDESIQYSSDYRASAKLLWTPPIGVLELGVLNATGLMPMKSRGGRGTTDAYCVAKYGTKWVRTRTIVDTFDPKWNEQYTWEVYDPYTVITIGVFDNLKLFGAGNENRLINDSRIGKIRIRLSTLVTSKIYTHSYPLMVLKPDGVKKMGEIQLAVRFTATSMMDMLQKYTEPLLPEMHYISPLSIYQLDSLRHQATHILCINLGRNEPALGRDVVEYMLDVGSNIWSLRRGRANFERLVSFFDGWIDAWKWFDEICKWKSPVTSVLVHIVCLFVVFLPKYCVFSMLLYCFVFGLYRFGLRPRHPPHMDIKLSKADSALPDELDEEFDVFPSSKSGDVLKRRYDRLRGIAGRMMIVLGDLATQGERVKSLLSWRDPRATSLFLTFCFVSCGVICFVSMKLLLTFLAFYVMRHPRVRVFDIPSIPQNFFRRLPSRADSIL.

Residues 1–12 (MAVNGTGNGTGD) are compositionally biased toward gly residues. The tract at residues 1–30 (MAVNGTGNGTGDGDFSLKETSPNIGNGGVN) is disordered. 3 consecutive C2 domains span residues 9-145 (GTGD…PQWY), 184-307 (VTGE…SLWY), and 338-471 (LDES…THSY). Ca(2+)-binding residues include D62, N110, D112, and D118. 2 consecutive transmembrane segments (helical) span residues 608 to 628 (LFVV…CFVF) and 722 to 742 (FVSC…FLAF).

The protein belongs to the MCTP family. Ca(2+) is required as a cofactor. Observed in flowers.

The protein localises to the endoplasmic reticulum membrane. May function as a signaling molecule by regulating the trafficking of other regulators. The protein is Multiple C2 domain and transmembrane region protein 11 of Arabidopsis thaliana (Mouse-ear cress).